A 327-amino-acid polypeptide reads, in one-letter code: Cobalamin biosynthesis protein CobD (327 aa).

Helical transmembrane passes span 63–83 (VGIL…ARLF), 84–104 (DVLG…FLAQ), 158–178 (FSDG…PGLL), and 305–325 (VFYA…LPLL).

This sequence belongs to the CobD/CbiB family.

It is found in the cell membrane. It participates in cofactor biosynthesis; adenosylcobalamin biosynthesis. Functionally, converts cobyric acid to cobinamide by the addition of aminopropanol on the F carboxylic group. The protein is Cobalamin biosynthesis protein CobD of Rhizobium meliloti (strain 1021) (Ensifer meliloti).